Reading from the N-terminus, the 315-residue chain is Ribose-phosphate pyrophosphokinase (315 aa).

Residues 37–39 (DGE) and 96–97 (RQ) contribute to the ATP site. Positions 131 and 171 each coordinate Mg(2+). The active site involves Lys195. Residues Arg197, Asp221, and 225-229 (DTGGT) contribute to the D-ribose 5-phosphate site.

This sequence belongs to the ribose-phosphate pyrophosphokinase family. Class I subfamily. As to quaternary structure, homohexamer. The cofactor is Mg(2+).

It localises to the cytoplasm. The enzyme catalyses D-ribose 5-phosphate + ATP = 5-phospho-alpha-D-ribose 1-diphosphate + AMP + H(+). The protein operates within metabolic intermediate biosynthesis; 5-phospho-alpha-D-ribose 1-diphosphate biosynthesis; 5-phospho-alpha-D-ribose 1-diphosphate from D-ribose 5-phosphate (route I): step 1/1. Its function is as follows. Involved in the biosynthesis of the central metabolite phospho-alpha-D-ribosyl-1-pyrophosphate (PRPP) via the transfer of pyrophosphoryl group from ATP to 1-hydroxyl of ribose-5-phosphate (Rib-5-P). The sequence is that of Ribose-phosphate pyrophosphokinase from Pasteurella multocida (strain Pm70).